The primary structure comprises 694 residues: Elongation factor G (694 aa).

Residues 6 to 288 (KLYRNIGIAA…GVIEYLPSPT (283 aa)) form the tr-type G domain. Residues 15 to 22 (AHVDAGKT), 86 to 90 (DTPGH), and 140 to 143 (NKMD) each bind GTP.

The protein belongs to the TRAFAC class translation factor GTPase superfamily. Classic translation factor GTPase family. EF-G/EF-2 subfamily.

The protein resides in the cytoplasm. Functionally, catalyzes the GTP-dependent ribosomal translocation step during translation elongation. During this step, the ribosome changes from the pre-translocational (PRE) to the post-translocational (POST) state as the newly formed A-site-bound peptidyl-tRNA and P-site-bound deacylated tRNA move to the P and E sites, respectively. Catalyzes the coordinated movement of the two tRNA molecules, the mRNA and conformational changes in the ribosome. This Legionella pneumophila (strain Corby) protein is Elongation factor G.